Here is a 445-residue protein sequence, read N- to C-terminus: MKKKIGLYWFTFDLRLHDNSLLVDASSFLDELVCLYCRPSVTPFLHHFAQEVTLGRARQKFIDASLCELNDALGQLGQRLWTLDLPPYQALKYAIQYLSVTHLYSDAMAGSDEQSILHKLQDEYPHLVIVQHSVRSLFDESKLPFTLPDLPETFTQFRKCVEGIDIAHPIDAPSRLPPMPKGAQLPTLSSFYFDESALFSGGEWSGLAHCRRYFFSGLASSYKETRNGLDGMAYSTKFSPWLALGCVSPRMIHAMLKQYEQTQGANDSTYWIYFELLWREYFYWYARCYQQRLFRFGGIRNQPPLTSFYAHRFQQWKNGTTPYPIVNACMHQLNHTGYMSNRGRQLVASCLVHELGLDWRYGAAYFETQLIDYDVGSNWGNWQYLAGVGADPRGSRQFNLEKQTQMYDPNHEFIERWQGRDSRAQQDVVDMVGWPITTQQENGDK.

The 134-residue stretch at 4–137 (KIGLYWFTFD…VIVQHSVRSL (134 aa)) folds into the Photolyase/cryptochrome alpha/beta domain.

It belongs to the DNA photolyase class-1 family. FAD serves as cofactor. It depends on (6R)-5,10-methylene-5,6,7,8-tetrahydrofolate as a cofactor.

In terms of biological role, may have a photoreceptor function. Binds DNA; probably functions as a transcriptional repressor. This is Cryptochrome DASH (cry) from Vibrio parahaemolyticus serotype O3:K6 (strain RIMD 2210633).